Here is a 510-residue protein sequence, read N- to C-terminus: Anaerobic nitric oxide reductase transcription regulator NorR (510 aa).

The Sigma-54 factor interaction domain occupies 188 to 417 (IIGNSQGMRT…LEHVIKRAAV (230 aa)). ATP is bound by residues 216–223 (GETGVGKE) and 279–288 (ADGGTLFLDE). Residues 486-505 (WAATARQLELDSGNLHRLAK) constitute a DNA-binding region (H-T-H motif).

It functions in the pathway nitrogen metabolism; nitric oxide reduction. Its function is as follows. Required for the expression of anaerobic nitric oxide (NO) reductase, acts as a transcriptional activator for at least the norVW operon. Activation also requires sigma-54. The chain is Anaerobic nitric oxide reductase transcription regulator NorR from Vibrio vulnificus (strain YJ016).